Reading from the N-terminus, the 517-residue chain is Bifunctional purine biosynthesis protein PurH (517 aa).

The MGS-like domain maps to 1–151 (MTQERKIKRA…KNFAHVAVLC (151 aa)).

The protein belongs to the PurH family.

It catalyses the reaction (6R)-10-formyltetrahydrofolate + 5-amino-1-(5-phospho-beta-D-ribosyl)imidazole-4-carboxamide = 5-formamido-1-(5-phospho-D-ribosyl)imidazole-4-carboxamide + (6S)-5,6,7,8-tetrahydrofolate. The catalysed reaction is IMP + H2O = 5-formamido-1-(5-phospho-D-ribosyl)imidazole-4-carboxamide. It functions in the pathway purine metabolism; IMP biosynthesis via de novo pathway; 5-formamido-1-(5-phospho-D-ribosyl)imidazole-4-carboxamide from 5-amino-1-(5-phospho-D-ribosyl)imidazole-4-carboxamide (10-formyl THF route): step 1/1. Its pathway is purine metabolism; IMP biosynthesis via de novo pathway; IMP from 5-formamido-1-(5-phospho-D-ribosyl)imidazole-4-carboxamide: step 1/1. The chain is Bifunctional purine biosynthesis protein PurH from Elusimicrobium minutum (strain Pei191).